The chain runs to 212 residues: Large ribosomal subunit protein uL3 (212 aa).

Residues 127–153 are disordered; that stretch reads FRGGPATHGQSDRHRAPGSIGSGTTPG.

Belongs to the universal ribosomal protein uL3 family. In terms of assembly, part of the 50S ribosomal subunit. Forms a cluster with proteins L14 and L19.

In terms of biological role, one of the primary rRNA binding proteins, it binds directly near the 3'-end of the 23S rRNA, where it nucleates assembly of the 50S subunit. In Herpetosiphon aurantiacus (strain ATCC 23779 / DSM 785 / 114-95), this protein is Large ribosomal subunit protein uL3.